The following is a 655-amino-acid chain: Epithelial sodium channel subunit alpha (655 aa).

At 1–55 (MTDKEEEAEGGKKKEPMIGFYDSYQELFEFFCNNTTIHGTIRMVCSKHNNMKTVS) the chain is on the cytoplasmic side. A helical transmembrane segment spans residues 56-76 (WTILFITTFGVMYWQFGLLLG). At 77 to 531 (QYYSYPVSIT…SQWSLWFGSS (455 aa)) the chain is on the extracellular side. Intrachain disulfides connect C102–C275, C199–C206, C252–C259, C364–C448, C385–C425, C385–C444, C389–C440, C398–C425, C398–C448, and C400–C414. The chain crosses the membrane as a helical span at residues 532 to 552 (VLSVVEMGELVFDLIAVGVIV). The Cytoplasmic segment spans residues 553-655 (LRRRRREKCQ…QEASEGPTVL (103 aa)). The tract at residues 561 to 587 (CQASSDGEGTSDSTAGTHRGQENASRS) is disordered. The segment covering 562–586 (QASSDGEGTSDSTAGTHRGQENASR) has biased composition (polar residues).

The protein belongs to the amiloride-sensitive sodium channel (TC 1.A.6) family. SCNN1A subfamily. Heterotrimer; containing an alpha/SCNN1A, a beta/SCNN1B and a gamma/SCNN1G subunit. In terms of tissue distribution, strongly expressed in gill, kidney and rectum (at protein level). More weakly expressed in muscle, brain, heart, liver and intestine.

It localises to the apical cell membrane. It is found in the cell projection. The protein localises to the cilium. The protein resides in the cytoplasmic granule. Its subcellular location is the cytoplasm. It localises to the cytoplasmic vesicle. It is found in the secretory vesicle. The protein localises to the acrosome. The protein resides in the flagellum. It catalyses the reaction Na(+)(in) = Na(+)(out). Originally identified and characterized by its inhibition by the diuretic drug amiloride. This is one of the three pore-forming subunits of the heterotrimeric epithelial sodium channel (ENaC), a critical regulator of sodium balance and fluid homeostasis. ENaC operates in epithelial tissues, where it mediates the electrodiffusion of sodium ions from extracellular fluid through the apical membrane of cells, with water following osmotically. The polypeptide is Epithelial sodium channel subunit alpha (scnn1a) (Neoceratodus forsteri (Australian lungfish)).